Reading from the N-terminus, the 165-residue chain is Hemolysin, heat labile (165 aa).

The cysteines at positions 151 and 161 are disulfide-linked.

This sequence belongs to the TDH hemolysin family. Homodimer.

In terms of biological role, bacterial hemolysins are exotoxins that attack blood cell membranes and cause cell rupture by mechanisms not clearly defined. The polypeptide is Hemolysin, heat labile (Grimontia hollisae (Vibrio hollisae)).